The sequence spans 431 residues: 3-phosphoshikimate 1-carboxyvinyltransferase (431 aa).

3 residues coordinate 3-phosphoshikimate: K22, S23, and R27. K22 is a phosphoenolpyruvate binding site. Residues G94 and R122 each coordinate phosphoenolpyruvate. Positions 167, 169, 314, and 341 each coordinate 3-phosphoshikimate. Phosphoenolpyruvate is bound at residue Q169. The active-site Proton acceptor is D314. 2 residues coordinate phosphoenolpyruvate: R345 and R391.

Belongs to the EPSP synthase family. As to quaternary structure, monomer.

The protein resides in the cytoplasm. The catalysed reaction is 3-phosphoshikimate + phosphoenolpyruvate = 5-O-(1-carboxyvinyl)-3-phosphoshikimate + phosphate. Its pathway is metabolic intermediate biosynthesis; chorismate biosynthesis; chorismate from D-erythrose 4-phosphate and phosphoenolpyruvate: step 6/7. Its function is as follows. Catalyzes the transfer of the enolpyruvyl moiety of phosphoenolpyruvate (PEP) to the 5-hydroxyl of shikimate-3-phosphate (S3P) to produce enolpyruvyl shikimate-3-phosphate and inorganic phosphate. The sequence is that of 3-phosphoshikimate 1-carboxyvinyltransferase from Leuconostoc citreum (strain KM20).